We begin with the raw amino-acid sequence, 73 residues long: Translation initiation factor IF-1 (73 aa).

An S1-like domain is found at 1-73; it reads MAKKDGVIEI…TRGRIVYRYK (73 aa).

This sequence belongs to the IF-1 family. In terms of assembly, component of the 30S ribosomal translation pre-initiation complex which assembles on the 30S ribosome in the order IF-2 and IF-3, IF-1 and N-formylmethionyl-tRNA(fMet); mRNA recruitment can occur at any time during PIC assembly.

The protein localises to the cytoplasm. Functionally, one of the essential components for the initiation of protein synthesis. Stabilizes the binding of IF-2 and IF-3 on the 30S subunit to which N-formylmethionyl-tRNA(fMet) subsequently binds. Helps modulate mRNA selection, yielding the 30S pre-initiation complex (PIC). Upon addition of the 50S ribosomal subunit IF-1, IF-2 and IF-3 are released leaving the mature 70S translation initiation complex. The polypeptide is Translation initiation factor IF-1 (Arthrobacter sp. (strain FB24)).